We begin with the raw amino-acid sequence, 621 residues long: UvrABC system protein C (621 aa).

The 79-residue stretch at 20-98 (MAPGVYCMYA…IKSLAPRYNV (79 aa)) folds into the GIY-YIG domain. Residues 207–242 (DLLAEELIQAMQVASEHLEFEQAARLRDLLTSLRSM) form the UVR domain.

The protein belongs to the UvrC family. Interacts with UvrB in an incision complex.

It is found in the cytoplasm. Functionally, the UvrABC repair system catalyzes the recognition and processing of DNA lesions. UvrC both incises the 5' and 3' sides of the lesion. The N-terminal half is responsible for the 3' incision and the C-terminal half is responsible for the 5' incision. The protein is UvrABC system protein C of Xylella fastidiosa (strain 9a5c).